The following is a 304-amino-acid chain: NADH-cytochrome b5 reductase 2 (304 aa).

A helical membrane pass occupies residues 6-26; it reads GTPVVVAVAAVAATVLLLLLL. The region spanning 43–155 is the FAD-binding FR-type domain; that stretch reads QAKYPLPLVG…RGPNGLLVYK (113 aa). FAD contacts are provided by residues 135 to 165 and 174 to 209; these read DSMKIGDVIDFRGPNGLLVYKGSGTFMIKPD and FAKHLGVIAGGTGITPMLQLIRHITSDPKDSTKCYL.

It belongs to the flavoprotein pyridine nucleotide cytochrome reductase family. FAD serves as cofactor.

Its subcellular location is the membrane. The catalysed reaction is 2 Fe(III)-[cytochrome b5] + NADH = 2 Fe(II)-[cytochrome b5] + NAD(+) + H(+). Functionally, NADH-cytochrome b5 reductases are involved in desaturation and elongation of fatty acids, cholesterol biosynthesis and drug metabolism. This chain is NADH-cytochrome b5 reductase 2 (CYB5R2), found in Gallus gallus (Chicken).